A 151-amino-acid chain; its full sequence is uncharacterized protein (151 aa).

This is an uncharacterized protein from Rhodobacter capsulatus (Rhodopseudomonas capsulata).